Reading from the N-terminus, the 556-residue chain is Dihydroxy-acid dehydratase (556 aa).

C47 serves as a coordination point for [2Fe-2S] cluster. A Mg(2+)-binding site is contributed by D79. C120 lines the [2Fe-2S] cluster pocket. Mg(2+)-binding residues include D121 and K122. At K122 the chain carries N6-carboxylysine. Residue C192 coordinates [2Fe-2S] cluster. Residue E444 participates in Mg(2+) binding. The active-site Proton acceptor is the S470.

It belongs to the IlvD/Edd family. In terms of assembly, homodimer. [2Fe-2S] cluster serves as cofactor. Requires Mg(2+) as cofactor.

It catalyses the reaction (2R)-2,3-dihydroxy-3-methylbutanoate = 3-methyl-2-oxobutanoate + H2O. It carries out the reaction (2R,3R)-2,3-dihydroxy-3-methylpentanoate = (S)-3-methyl-2-oxopentanoate + H2O. It participates in amino-acid biosynthesis; L-isoleucine biosynthesis; L-isoleucine from 2-oxobutanoate: step 3/4. It functions in the pathway amino-acid biosynthesis; L-valine biosynthesis; L-valine from pyruvate: step 3/4. Its function is as follows. Functions in the biosynthesis of branched-chain amino acids. Catalyzes the dehydration of (2R,3R)-2,3-dihydroxy-3-methylpentanoate (2,3-dihydroxy-3-methylvalerate) into 2-oxo-3-methylpentanoate (2-oxo-3-methylvalerate) and of (2R)-2,3-dihydroxy-3-methylbutanoate (2,3-dihydroxyisovalerate) into 2-oxo-3-methylbutanoate (2-oxoisovalerate), the penultimate precursor to L-isoleucine and L-valine, respectively. The polypeptide is Dihydroxy-acid dehydratase (Prochlorococcus marinus (strain MIT 9313)).